The following is a 27-amino-acid chain: Omega-conotoxin RVIA (27 aa).

Disulfide bonds link Cys-1-Cys-16, Cys-8-Cys-19, and Cys-15-Cys-26. 4-hydroxyproline occurs at positions 4 and 7.

This sequence belongs to the conotoxin O1 superfamily. As to expression, expressed by the venom duct.

It localises to the secreted. In terms of biological role, omega-conotoxins act at presynaptic membranes, they bind and block voltage-gated calcium channels (Cav). In Conus radiatus (Rayed cone), this protein is Omega-conotoxin RVIA.